The primary structure comprises 220 residues: Orotidine 5'-phosphate decarboxylase (220 aa).

Residues Asp12, Lys34, 60–69, Ser117, 170–180, Gly193, and Arg194 contribute to the substrate site; these read DFKVADIPNT and PGVGAQGGKAS. Lys62 acts as the Proton donor in catalysis.

Belongs to the OMP decarboxylase family. Type 1 subfamily. As to quaternary structure, homodimer.

The catalysed reaction is orotidine 5'-phosphate + H(+) = UMP + CO2. Its pathway is pyrimidine metabolism; UMP biosynthesis via de novo pathway; UMP from orotate: step 2/2. Catalyzes the decarboxylation of orotidine 5'-monophosphate (OMP) to uridine 5'-monophosphate (UMP). The chain is Orotidine 5'-phosphate decarboxylase from Methanosarcina mazei (strain ATCC BAA-159 / DSM 3647 / Goe1 / Go1 / JCM 11833 / OCM 88) (Methanosarcina frisia).